A 292-amino-acid chain; its full sequence is Glutamyl-Q tRNA(Asp) synthetase (292 aa).

Residues 9–13 (RFAPS) and Glu-45 each bind L-glutamate. The 'HIGH' region motif lies at 12-22 (PSPSGPLHAGS). Cys-99, Cys-101, Tyr-121, and Cys-125 together coordinate Zn(2+). Residues Tyr-184 and Arg-202 each coordinate L-glutamate. A 'KMSKS' region motif is present at residues 240 to 244 (KLSKQ). Lys-243 is an ATP binding site.

This sequence belongs to the class-I aminoacyl-tRNA synthetase family. GluQ subfamily. It depends on Zn(2+) as a cofactor.

Functionally, catalyzes the tRNA-independent activation of glutamate in presence of ATP and the subsequent transfer of glutamate onto a tRNA(Asp). Glutamate is transferred on the 2-amino-5-(4,5-dihydroxy-2-cyclopenten-1-yl) moiety of the queuosine in the wobble position of the QUC anticodon. The polypeptide is Glutamyl-Q tRNA(Asp) synthetase (Verminephrobacter eiseniae (strain EF01-2)).